Here is a 395-residue protein sequence, read N- to C-terminus: Chalcone synthase (395 aa).

At valine 2 the chain carries N-acetylvaline. Residue cysteine 169 is part of the active site.

This sequence belongs to the thiolase-like superfamily. Chalcone/stilbene synthases family.

It catalyses the reaction (E)-4-coumaroyl-CoA + 3 malonyl-CoA + 3 H(+) = 2',4,4',6'-tetrahydroxychalcone + 3 CO2 + 4 CoA. It functions in the pathway secondary metabolite biosynthesis; flavonoid biosynthesis. The primary product of this enzyme is 4,2',4',6'-tetrahydroxychalcone (also termed naringenin-chalcone or chalcone) which can under specific conditions spontaneously isomerize into naringenin. In Cardamine amara (Large bitter-cress), this protein is Chalcone synthase (CHS).